We begin with the raw amino-acid sequence, 37 residues long: MKIRASVRKICTKCRLIRRRGRIIVICSNPRHKQRQG.

The protein belongs to the bacterial ribosomal protein bL36 family.

It localises to the plastid. Its subcellular location is the chloroplast. The polypeptide is Large ribosomal subunit protein bL36c (Oenothera argillicola (Appalachian evening primrose)).